A 314-amino-acid chain; its full sequence is Olfactory receptor 1E1 (314 aa).

At 1 to 25 (MMGQNQTSISDFLLLGLPIQPEQQN) the chain is on the extracellular side. Residue Asn5 is glycosylated (N-linked (GlcNAc...) asparagine). The chain crosses the membrane as a helical span at residues 26–49 (LCYALFLAMYLTTLLGNLLIIVLI). Over 50-57 (RLDSHLHT) the chain is Cytoplasmic. A helical transmembrane segment spans residues 58–79 (PMYLFLSNLSFSDLCFSSVTIP). At 80–100 (KLLQNMQNQDPSIPYADCLTQ) the chain is on the extracellular side. A helical transmembrane segment spans residues 101-120 (MYFFLLFGDLESFLLVAMAY). Residues 121–139 (DRYVAICFPLHYTAIMSPM) lie on the Cytoplasmic side of the membrane. Residues 140 to 158 (LCLALVALSWVLTTFHAML) form a helical membrane-spanning segment. Residues 159–195 (HTLLMARLCFCADNVIPHFFCDMSALLKLAFSDTRVN) are Extracellular-facing. A helical membrane pass occupies residues 196–219 (EWVIFIMGGLILVIPFLLILGSYA). Residues 220 to 236 (RIVSSILKVPSSKGICK) are Cytoplasmic-facing. The helical transmembrane segment at 237–259 (AFSTCGSHLSVVSLFYGTVIGLY) threads the bilayer. At 260 to 272 (LCSSANSSTLKDT) the chain is on the extracellular side. A helical membrane pass occupies residues 273–292 (VMAMMYTVVTPMLNPFIYSL). At 293 to 314 (RNRDMKGALSRVIHQKKTFFSL) the chain is on the cytoplasmic side.

This sequence belongs to the G-protein coupled receptor 1 family.

It is found in the cell membrane. In terms of biological role, odorant receptor. The protein is Olfactory receptor 1E1 (OR1E1) of Homo sapiens (Human).